The primary structure comprises 383 residues: Pentatricopeptide repeat-containing protein 2, mitochondrial (383 aa).

A PPR repeat occupies 161-195; it reads TSFNILMDMLFIKGKYKSALEVLIEMKNQNVKFTT. S377 carries the phosphoserine modification.

The protein belongs to the PTCD2 family.

The protein localises to the mitochondrion. Functionally, involved in mitochondrial RNA maturation and mitochondrial respiratory chain function. The chain is Pentatricopeptide repeat-containing protein 2, mitochondrial (PTCD2) from Pongo abelii (Sumatran orangutan).